Here is a 335-residue protein sequence, read N- to C-terminus: MQTAVQTQTTVQTLLTPRFYTTDFDQMAKYDISKNRAEIEAIVNEFRKDYNQTHFIRDDEFDQVWTQMPESKRQWFKEFLERSCTAEFSGFLLYKELSRRLKDTNPLLAEGFGYMSRDEARHAGFLNKAMADFGVSLDLGFLTKHRQYTFFAPKFIFYATYLSEKIGYWRYITIYRHLEAHPKWSVYPIFKFFEKWCQDENRHGDFFAAILKAQPKWITGWASRLWCRFFLLSVFVTMYLNDLQRKDFYQLIGLDARAFDWHVIRKTNESAARLFPVVLDVDHVDFVRLMDECACAYAHWRETQSVLSLAKIFACLFKLYVIKPINTQALWNTIK.

The protein belongs to the AcsF family. The cofactor is Fe cation.

The protein resides in the plastid. It localises to the chloroplast. The enzyme catalyses Mg-protoporphyrin IX 13-monomethyl ester + 3 NADPH + 3 O2 + 2 H(+) = 3,8-divinyl protochlorophyllide a + 3 NADP(+) + 5 H2O. The protein operates within porphyrin-containing compound metabolism; chlorophyll biosynthesis (light-independent). Catalyzes the formation of the isocyclic ring in chlorophyll biosynthesis. Mediates the cyclase reaction, which results in the formation of divinylprotochlorophyllide (Pchlide) characteristic of all chlorophylls from magnesium-protoporphyrin IX 13-monomethyl ester (MgPMME). The chain is Magnesium-protoporphyrin IX monomethyl ester [oxidative] cyclase from Cyanidioschyzon merolae (strain NIES-3377 / 10D) (Unicellular red alga).